The primary structure comprises 173 residues: Cytochrome c homolog (173 aa).

At 1–8 (MSGKELNK) the chain is on the cytoplasmic side. The helical; Signal-anchor transmembrane segment at 9 to 29 (IVAAILFASLIAMMVGFIANI) threads the bilayer. At 30-173 (LYKPVLEPKH…LFLKTYVHDK (144 aa)) the chain is on the periplasmic side. Heme c-binding residues include Cys-82, Cys-85, His-86, and Met-148.

This sequence belongs to the cytochrome c family. Post-translationally, binds 1 heme c group covalently per subunit.

The protein localises to the cell membrane. Functionally, may be involved in electron transfer from bc1 complex to aa3. The chain is Cytochrome c homolog (cycM) from Rickettsia bellii (strain RML369-C).